The primary structure comprises 474 residues: Bifunctional ribulose 5-phosphate reductase/CDP-ribitol pyrophosphorylase Bcs1 (474 aa).

A ribitol-5-phosphate cytidylyltransferase region spans residues 1–238 (MNKNKNIGII…DKLFQSRSHF (238 aa)). The ribulose-5-phosphate reductase stretch occupies residues 250–474 (YDMKDQVLVV…ITNILADLYK (225 aa)).

In the N-terminal section; belongs to the IspD/TarI cytidylyltransferase family. The protein in the C-terminal section; belongs to the short-chain dehydrogenases/reductases (SDR) family. In terms of assembly, monomer.

It carries out the reaction D-ribitol 5-phosphate + CTP + H(+) = CDP-L-ribitol + diphosphate. It catalyses the reaction D-ribitol 5-phosphate + NADP(+) = D-ribulose 5-phosphate + NADPH + H(+). The protein operates within capsule biogenesis; capsule polysaccharide biosynthesis. Its function is as follows. Catalyzes the NADPH-dependent reduction of D-ribulose 5-phosphate to D-ribitol 5-phosphate and the further reaction of D-ribitol 5-phosphate with CTP to form CDP-ribitol. This Haemophilus influenzae protein is Bifunctional ribulose 5-phosphate reductase/CDP-ribitol pyrophosphorylase Bcs1.